A 371-amino-acid polypeptide reads, in one-letter code: 4-hydroxy-3-methylbut-2-en-1-yl diphosphate synthase (flavodoxin) (371 aa).

Residues Cys270, Cys273, Cys305, and Glu312 each coordinate [4Fe-4S] cluster.

The protein belongs to the IspG family. [4Fe-4S] cluster is required as a cofactor.

It catalyses the reaction (2E)-4-hydroxy-3-methylbut-2-enyl diphosphate + oxidized [flavodoxin] + H2O + 2 H(+) = 2-C-methyl-D-erythritol 2,4-cyclic diphosphate + reduced [flavodoxin]. It participates in isoprenoid biosynthesis; isopentenyl diphosphate biosynthesis via DXP pathway; isopentenyl diphosphate from 1-deoxy-D-xylulose 5-phosphate: step 5/6. Converts 2C-methyl-D-erythritol 2,4-cyclodiphosphate (ME-2,4cPP) into 1-hydroxy-2-methyl-2-(E)-butenyl 4-diphosphate. The polypeptide is 4-hydroxy-3-methylbut-2-en-1-yl diphosphate synthase (flavodoxin) (Chromohalobacter salexigens (strain ATCC BAA-138 / DSM 3043 / CIP 106854 / NCIMB 13768 / 1H11)).